The primary structure comprises 354 residues: GRAM domain-containing protein 2A (354 aa).

The span at 1 to 29 (MTALSRSEATEEGGNQQMHRKTASLNSPV) shows a compositional bias: polar residues. The tract at residues 1–46 (MTALSRSEATEEGGNQQMHRKTASLNSPVSCKEKPDRVEEPPDYSL) is disordered. Residues 31-40 (CKEKPDRVEE) show a composition bias toward basic and acidic residues. A GRAM domain is found at 72-139 (QQYHKLFKDV…VSVQMIKKHK (68 aa)). The chain crosses the membrane as a helical span at residues 312–332 (LLKVFFVLICFLVMSSSYLAF).

It localises to the endoplasmic reticulum membrane. Its subcellular location is the cell membrane. Its function is as follows. Participates in the organization of endoplasmic reticulum-plasma membrane contact sites (EPCS) with pleiotropic functions including STIM1 recruitment and calcium homeostasis. Constitutive tether that co-localize with ESYT2/3 tethers at endoplasmic reticulum-plasma membrane contact sites in a phosphatidylinositol lipid-dependent manner. Pre-marks the subset of phosphtidylinositol 4,5-biphosphate (PI(4,5)P2)-enriched EPCS destined for the store operated calcium entry pathway (SOCE). This is GRAM domain-containing protein 2A from Homo sapiens (Human).